The chain runs to 198 residues: Peptide deformylase (198 aa).

Residues C123 and H167 each coordinate Fe cation. E168 is an active-site residue. A Fe cation-binding site is contributed by H171.

Belongs to the polypeptide deformylase family. The cofactor is Fe(2+).

The enzyme catalyses N-terminal N-formyl-L-methionyl-[peptide] + H2O = N-terminal L-methionyl-[peptide] + formate. In terms of biological role, removes the formyl group from the N-terminal Met of newly synthesized proteins. Requires at least a dipeptide for an efficient rate of reaction. N-terminal L-methionine is a prerequisite for activity but the enzyme has broad specificity at other positions. This chain is Peptide deformylase, found in Ureaplasma parvum serovar 3 (strain ATCC 27815 / 27 / NCTC 11736).